We begin with the raw amino-acid sequence, 145 residues long: D-aminoacyl-tRNA deacylase (145 aa).

A Gly-cisPro motif, important for rejection of L-amino acids motif is present at residues 137–138; it reads GP.

Belongs to the DTD family. In terms of assembly, homodimer.

The protein resides in the cytoplasm. It carries out the reaction glycyl-tRNA(Ala) + H2O = tRNA(Ala) + glycine + H(+). The catalysed reaction is a D-aminoacyl-tRNA + H2O = a tRNA + a D-alpha-amino acid + H(+). An aminoacyl-tRNA editing enzyme that deacylates mischarged D-aminoacyl-tRNAs. Also deacylates mischarged glycyl-tRNA(Ala), protecting cells against glycine mischarging by AlaRS. Acts via tRNA-based rather than protein-based catalysis; rejects L-amino acids rather than detecting D-amino acids in the active site. By recycling D-aminoacyl-tRNA to D-amino acids and free tRNA molecules, this enzyme counteracts the toxicity associated with the formation of D-aminoacyl-tRNA entities in vivo and helps enforce protein L-homochirality. The chain is D-aminoacyl-tRNA deacylase from Shewanella piezotolerans (strain WP3 / JCM 13877).